Reading from the N-terminus, the 200-residue chain is Recombination protein RecR (200 aa).

The C4-type zinc-finger motif lies at 57-72 (CERCRNYAQSTLCPVC). The Toprim domain maps to 80–175 (SLVCIVATPG…GVSRIAQGVP (96 aa)).

Belongs to the RecR family.

In terms of biological role, may play a role in DNA repair. It seems to be involved in an RecBC-independent recombinational process of DNA repair. It may act with RecF and RecO. This is Recombination protein RecR from Alcanivorax borkumensis (strain ATCC 700651 / DSM 11573 / NCIMB 13689 / SK2).